The primary structure comprises 226 residues: MLLHIPALFTADEVSRIRAALEQAEWADGKATAGYQSAKAKHNLQLPQDHPLAREIGEAMLQRLWNHPLFMSAALPLKVFPPLFNCYTGGGSFDFHIDNAVRDIQGGRERVRTDLSSTLFFSDPQDYDGGELVIQDTYGLHQVKLPAGDLVLYPGTSLHKVNPVTRGARYASFFWTQSLVREDSQRTLLFEMDQSIQQLTRDVPEHPSLIRLTGTYHNLLRRWSEL.

In terms of domain architecture, Fe2OG dioxygenase spans 78-178; it reads KVFPPLFNCY…RYASFFWTQS (101 aa). Fe cation is bound by residues H96, D98, and H159. 2-oxoglutarate is bound at residue R169.

It depends on Fe(2+) as a cofactor. L-ascorbate serves as cofactor.

The chain is PKHD-type hydroxylase PSPA7_5129 from Pseudomonas paraeruginosa (strain DSM 24068 / PA7) (Pseudomonas aeruginosa (strain PA7)).